We begin with the raw amino-acid sequence, 726 residues long: Biotin--protein ligase (726 aa).

Positions Glu28 to His98 are disordered. The span at Pro43–Gln75 shows a compositional bias: basic and acidic residues. Phosphoserine is present on residues Ser147 and Ser299. The 190-residue stretch at Lys463 to Gln652 folds into the BPL/LPL catalytic domain.

The protein belongs to the biotin--protein ligase family. Monomer. Widely expressed. Mostly expressed in muscle, placenta and to a lower extent in the brain, kidney, pancreas, liver and lung.

It localises to the cytoplasm. The protein resides in the mitochondrion. The catalysed reaction is apo-[methylmalonyl-CoA:pyruvate carboxytransferase] + biotin + ATP = holo-[methylmalonyl-CoA:pyruvate carboxytransferase] + AMP + diphosphate + H(+). The enzyme catalyses apo-[propionyl-CoA:carbon-dioxide ligase (ADP-forming)] + biotin + ATP = holo-[propionyl-CoA:carbon-dioxide ligase (ADP-forming)] + AMP + diphosphate + H(+). It catalyses the reaction apo-[3-methylcrotonoyl-CoA:carbon-dioxide ligase (ADP-forming)] + biotin + ATP = holo-[3-methylcrotonoyl-CoA:carbon-dioxide ligase (ADP-forming)] + AMP + diphosphate + H(+). It carries out the reaction biotin + L-lysyl-[protein] + ATP = N(6)-biotinyl-L-lysyl-[protein] + AMP + diphosphate + H(+). Functionally, biotin--protein ligase catalyzing the biotinylation of the 4 biotin-dependent carboxylases acetyl-CoA-carboxylase, pyruvate carboxylase, propionyl-CoA carboxylase, and methylcrotonyl-CoA carboxylase. This Homo sapiens (Human) protein is Biotin--protein ligase.